The sequence spans 1335 residues: Regulatory-associated protein of mTOR (1335 aa).

2 positions are modified to phosphoserine: S44 and S122. Phosphoserine; by MAPK8 is present on S696. A glycan (O-linked (GlcNAc) threonine) is linked at T700. T706 bears the Phosphothreonine; by MAPK8 mark. 2 positions are modified to phosphoserine; by RPS6KA1: S719 and S721. S722 carries the post-translational modification Phosphoserine; by AMPK and RPS6KA1. A Phosphoserine modification is found at S738. Residue S791 is modified to Phosphoserine; by PKA. S792 carries the phosphoserine; by AMPK modification. A phosphoserine mark is found at S836 and S855. Residues 850 to 943 form a disordered region; it reads VLDTSSLTQS…PEQTADDADD (94 aa). Residues 851-866 are compositionally biased toward polar residues; the sequence is LDTSSLTQSAPASPTN. Residue S859 is modified to Phosphoserine; by MTOR. Position 863 is a phosphoserine; by MAPK8, MTOR and NLK (S863). T865 is subject to Phosphothreonine. Over residues 874–887 the composition is skewed to low complexity; it reads AGGSPPASSTSSSS. Position 877 is a phosphoserine; by TBK1 (S877). Residues K932 and K948 each participate in a glycyl lysine isopeptide (Lys-Gly) (interchain with G-Cter in ubiquitin) cross-link. S982 carries the post-translational modification Phosphoserine. WD repeat units follow at residues 1020–1061, 1065–1106, 1121–1160, 1164–1203, 1209–1249, 1251–1291, and 1299–1335; these read NRNP…DYFH, PRYT…EKNP, TTRG…KVQD, GADS…SECR, EHTA…SVNV, QIVK…NNIK, and QRVG…KRVR. Residue K1097 is modified to N6-acetyllysine.

It belongs to the WD repeat RAPTOR family. Part of the mechanistic target of rapamycin complex 1 (mTORC1) which contains MTOR, MLST8 and RPTOR. mTORC1 associates with AKT1S1/PRAS40, which inhibits its activity. mTORC1 associates with DEPTOR, which regulates its activity. mTORC1 binds to and is inhibited by FKBP12-rapamycin. Forms a complex with MTOR under both leucine-rich and -poor conditions. Interacts with (via TOS motifs) EIF4EBP1 and RPS6KB1; interaction is independent of its association with MTOR. Binds preferentially to poorly or non-phosphorylated forms of EIF4EBP1, and this binding is critical to the ability of MTOR to catalyze phosphorylation. Interacts with ULK1 in a nutrient-dependent manner; the interaction is reduced during starvation. Interacts with GTP-bound form of RagA/RRAGA or RagB/RRAGB and GDP-bound form of RagC/RRAGC or RagD/RRAGD, promoting recruitment of mTORC1 to the lysosomes. Interacts (when phosphorylated by AMPK) with 14-3-3 protein, leading to inhibition of its activity. Interacts with SPAG5; SPAG5 competes with MTOR for RPTOR-binding, resulting in decreased mTORC1 formation. Interacts with WAC; WAC positively regulates MTOR activity by promoting the assembly of the TTT complex composed of TELO2, TTI1 and TTI2 and the RUVBL complex composed of RUVBL1 and RUVBL2 into the TTT-RUVBL complex which leads to the dimerization of the mTORC1 complex and its subsequent activation. Interacts with G3BP1. The complex formed with G3BP1 and SPAG5 is increased by oxidative stress. Interacts with HTR6. Interacts with PIH1D1. Interacts with LARP1. Interacts with BRAT1. Interacts with SIK3. Interacts with SLC38A7; this interaction mediates the recruitment of mTORC1 to the lysosome and its subsequent activation. As to quaternary structure, (Microbial infection) Interacts with vaccinia virus protein F17; this interaction dysregulates mTOR. In terms of processing, insulin-stimulated phosphorylation at Ser-863 by MTOR and MAPK8 regulates mTORC1 activity. Phosphorylated at Ser-863 by NLK in response to stress, disrupting the interaction with small GTPases Rag (RagA/RRAGA, RagB/RRAGB, RagC/RRAGC and/or RagD/RRAGD), thereby preventing lysosome recruitment and activation of the mTORC1 complex. Osmotic stress also induces phosphorylation at Ser-696, Thr-706 and Ser-863 by MAPK8. Ser-863 phosphorylation is required for phosphorylation at Ser-855 and Ser-859. In response to nutrient limitation, phosphorylated at Ser-722 and Ser-792 by AMPK; phosphorylation promotes interaction with 14-3-3 proteins, leading to negative regulation of the mTORC1 complex. Phosphorylation at Ser-722 and Ser-792 by AMPK in response to glucose starvation inhibits O-GlcNAcylation by OGT and subsequent activation of mTORC1. In response to growth factors, phosphorylated at Ser-719, Ser-721 and Ser-722 by RPS6KA1, which stimulates mTORC1 activity. Phosphorylation at Ser-791 by PKA downstream of cAMP inhibits the mTORC1 complex. Phosphorylated at Ser-877 by TBK1, leading to negative regulation of the mTORC1 complex. O-GlcNAcylated by OGT upon glucose sufficiency, promoting interaction with small GTPases Rag (RagA/RRAGA, RagB/RRAGB, RagC/RRAGC and/or RagD/RRAGD) and subsequent recruitment of mTORC1 to lysosomal membranes, leading to activation of the mTORC1 complex. Phosphorylation at Ser-722 and Ser-792 by AMPK in response to glucose starvation inhibits O-GlcNAcylation. Post-translationally, acetylation at Lys-1097 by EP300/p300 in response to leucine metabolite acetyl-coA promotes its activity, leading to activation of the mTORC1 complex. Acetylation is decreased in response to fasting. In terms of processing, ubiquitinated, leading to its degradation by the proteasome. Deubiquitinated by OTUB1 via a non-catalytic mechanism. Ubiquitinated by an E3 ubiquitin ligase complex containing VHL. Highly expressed in skeletal muscle, and in a lesser extent in brain, lung, small intestine, kidney and placenta. In terms of tissue distribution, widely expressed, with highest levels in nasal mucosa and pituitary and lowest in spleen.

It is found in the lysosome membrane. It localises to the cytoplasm. The protein localises to the cytoplasmic granule. In terms of biological role, component of the mechanistic target of rapamycin complex 1 (mTORC1), an evolutionarily conserved central nutrient sensor that stimulates anabolic reactions and macromolecule biosynthesis to promote cellular biomass generation and growth. In response to nutrients, growth factors or amino acids, mTORC1 is recruited to the lysosome membrane and promotes protein, lipid and nucleotide synthesis by phosphorylating several substrates, such as ribosomal protein S6 kinase (RPS6KB1 and RPS6KB2) and EIF4EBP1 (4E-BP1). In the same time, it inhibits catabolic pathways by phosphorylating the autophagy initiation components ULK1 and ATG13, as well as transcription factor TFEB, a master regulators of lysosomal biogenesis and autophagy. The mTORC1 complex is inhibited in response to starvation and amino acid depletion. Within the mTORC1 complex, RPTOR acts both as a molecular adapter, which (1) mediates recruitment of mTORC1 to lysosomal membranes via interaction with small GTPases Rag (RagA/RRAGA, RagB/RRAGB, RagC/RRAGC and/or RagD/RRAGD), and a (2) substrate-specific adapter, which promotes substrate specificity by binding to TOS motif-containing proteins and direct them towards the active site of the MTOR kinase domain for phosphorylation. mTORC1 complex regulates many cellular processes, such as odontoblast and osteoclast differentiation or neuronal transmission. mTORC1 complex in excitatory neuronal transmission is required for the prosocial behavior induced by the psychoactive substance lysergic acid diethylamide (LSD). This Homo sapiens (Human) protein is Regulatory-associated protein of mTOR.